The following is a 165-amino-acid chain: Phosphopantetheine adenylyltransferase (165 aa).

Position 10 (Ser10) interacts with substrate. ATP is bound by residues 10-11 and His18; that span reads SF. Residues Lys42, Thr79, and Arg93 each coordinate substrate. ATP contacts are provided by residues 94–96, Glu104, and 129–135; these read GLR and VRPITAT.

Belongs to the bacterial CoaD family. Homohexamer. Mg(2+) is required as a cofactor.

The protein resides in the cytoplasm. The enzyme catalyses (R)-4'-phosphopantetheine + ATP + H(+) = 3'-dephospho-CoA + diphosphate. It participates in cofactor biosynthesis; coenzyme A biosynthesis; CoA from (R)-pantothenate: step 4/5. Reversibly transfers an adenylyl group from ATP to 4'-phosphopantetheine, yielding dephospho-CoA (dPCoA) and pyrophosphate. The polypeptide is Phosphopantetheine adenylyltransferase (Nitrobacter hamburgensis (strain DSM 10229 / NCIMB 13809 / X14)).